We begin with the raw amino-acid sequence, 388 residues long: Phosphopentomutase (388 aa).

Mn(2+) contacts are provided by aspartate 9, aspartate 283, histidine 288, aspartate 324, histidine 325, and histidine 336.

This sequence belongs to the phosphopentomutase family. It depends on Mn(2+) as a cofactor.

Its subcellular location is the cytoplasm. It carries out the reaction 2-deoxy-alpha-D-ribose 1-phosphate = 2-deoxy-D-ribose 5-phosphate. It catalyses the reaction alpha-D-ribose 1-phosphate = D-ribose 5-phosphate. It participates in carbohydrate degradation; 2-deoxy-D-ribose 1-phosphate degradation; D-glyceraldehyde 3-phosphate and acetaldehyde from 2-deoxy-alpha-D-ribose 1-phosphate: step 1/2. Its function is as follows. Isomerase that catalyzes the conversion of deoxy-ribose 1-phosphate (dRib-1-P) and ribose 1-phosphate (Rib-1-P) to deoxy-ribose 5-phosphate (dRib-5-P) and ribose 5-phosphate (Rib-5-P), respectively. This chain is Phosphopentomutase, found in Deinococcus radiodurans (strain ATCC 13939 / DSM 20539 / JCM 16871 / CCUG 27074 / LMG 4051 / NBRC 15346 / NCIMB 9279 / VKM B-1422 / R1).